The sequence spans 255 residues: MLGNHLFFIPVLPLFALFSLILKNSWKDILEKAVDPIAICAYGFTIKMALIAALFNSIFGFLITWVITRYEFKGKKFIDAAVDLPFALPTSVAGLTLATVYGNQGWVGRFLKMGNLQIIYTKFGVLLAMIFVSFPFVIRSLQPVLQGLDHGLEEAAWCLGASSFQTFLRVIFPTLVPALVTGFTLSFSRALGEFGSVVMISSNLPLDDLVTSVLIYQSLEQYDYFGASVIGAVILMIALLIIFLINTAQAFYSRR.

Transmembrane regions (helical) follow at residues 2-22 (LGNH…SLIL), 48-68 (MALI…WVIT), 77-97 (FIDA…GLTL), 118-138 (IIYT…PFVI), 167-187 (FLRV…TLSF), 195-215 (GSVV…SVLI), and 225-245 (FGAS…IFLI). The region spanning 42 to 246 (YGFTIKMALI…IALLIIFLIN (205 aa)) is the ABC transmembrane type-1 domain.

This sequence belongs to the binding-protein-dependent transport system permease family. CysTW subfamily.

Its subcellular location is the plastid membrane. Part of the ABC transporter complex cysAWTP (TC 3.A.1.6.1) involved in sulfate/thiosulfate import. Probably responsible for the translocation of the substrate across the membrane. This chain is Probable sulfate transport system permease protein cysT (cysT), found in Prototheca wickerhamii.